Consider the following 211-residue polypeptide: Troponin I, cardiac muscle (211 aa).

An N-acetylalanine modification is found at Ala-1. The disordered stretch occupies residues 1-43 (ADESRDAAGEARPAPAPVRRRSSANYRAYATEPHAKSKKKISA). Phosphoserine is present on Ser-4. Ser-22 is subject to Phosphoserine; by PHK, PKA and PKD/PRKD1. A Phosphoserine; by PKA and PKD/PRKD1 modification is found at Ser-23. Tyr-26 carries the phosphotyrosine modification. Thr-31 carries the phosphothreonine; by STK4/MST1 modification. The tract at residues 32–79 (EPHAKSKKKISASRKLQLKTLMLQIAKQELEREAEERRGEKGRALSTR) is involved in binding TNC. Residues Ser-42 and Ser-44 each carry the phosphoserine; by PKC/PRKCE modification. Thr-51 carries the phosphothreonine; by STK4/MST1 modification. Ser-77 carries the post-translational modification Phosphoserine. Residue Thr-78 is modified to Phosphothreonine. Residues Thr-129 and Thr-143 each carry the phosphothreonine; by STK4/MST1 modification. An involved in binding TNC and actin region spans residues 129–150 (TQKIFDLRGKFKRPTLRLRVRI). Position 151 is a phosphoserine; by PAK3 (Ser-151). Position 182 is a phosphothreonine (Thr-182). At Ser-200 the chain carries Phosphoserine.

It belongs to the troponin I family. Interacts with TRIM63. Binds to actin and tropomyosin. Interacts with STK4/MST1. Phosphorylated at Ser-22 and Ser-23 by PRKD1; phosphorylation reduces myofilament calcium sensitivity. Phosphorylated preferentially at Thr-31. Phosphorylation by STK4/MST1 alters its binding affinity to TNNC1 (cardiac Tn-C) and TNNT2 (cardiac Tn-T). Phosphorylated at Ser-42 and Ser-44 by PRKCE; phosphorylation increases myocardium contractile dysfunction. Ser-22 is one of three sites in the region of residues 1-48 that are phosphorylated by phosphorylase kinase.

Its function is as follows. Troponin I is the inhibitory subunit of troponin, the thin filament regulatory complex which confers calcium-sensitivity to striated muscle actomyosin ATPase activity. This Oryctolagus cuniculus (Rabbit) protein is Troponin I, cardiac muscle (TNNI3).